The primary structure comprises 328 residues: tRNA uridine(34) hydroxylase (328 aa).

The region spanning Leu130–Glu224 is the Rhodanese domain. The active-site Cysteine persulfide intermediate is the Cys184.

Belongs to the TrhO family.

The catalysed reaction is uridine(34) in tRNA + AH2 + O2 = 5-hydroxyuridine(34) in tRNA + A + H2O. Its function is as follows. Catalyzes oxygen-dependent 5-hydroxyuridine (ho5U) modification at position 34 in tRNAs. The sequence is that of tRNA uridine(34) hydroxylase from Streptococcus pyogenes serotype M6 (strain ATCC BAA-946 / MGAS10394).